We begin with the raw amino-acid sequence, 167 residues long: Leptin (167 aa).

The signal sequence occupies residues 1 to 21; the sequence is MRCGSLCRFLWLWSCLPYIEA. Cys-117 and Cys-167 are oxidised to a cystine.

The protein belongs to the leptin family.

The protein resides in the secreted. Functionally, key player in the regulation of energy balance and body weight control. Once released into the circulation, has central and peripheral effects by binding LEPR, found in many tissues, which results in the activation of several major signaling pathways. In the hypothalamus, acts as an appetite-regulating factor that induces a decrease in food intake and an increase in energy consumption by inducing anorexinogenic factors and suppressing orexigenic neuropeptides, also regulates bone mass and secretion of hypothalamo-pituitary-adrenal hormones. In the periphery, increases basal metabolism, influences reproductive function, regulates pancreatic beta-cell function and insulin secretion, is pro-angiogenic for endothelial cell and affects innate and adaptive immunity. In the arcuate nucleus of the hypothalamus, activates by depolarization POMC neurons inducing FOS and SOCS3 expression to release anorexigenic peptides and inhibits by hyperpolarization NPY neurons inducing SOCS3 with a consequent reduction on release of orexigenic peptides. In addition to its known satiety inducing effect, has a modulatory role in nutrient absorption. In the intestine, reduces glucose absorption by enterocytes by activating PKC and leading to a sequential activation of p38, PI3K and ERK signaling pathways which exerts an inhibitory effect on glucose absorption. Acts as a growth factor on certain tissues, through the activation of different signaling pathways increases expression of genes involved in cell cycle regulation such as CCND1, via JAK2-STAT3 pathway, or VEGFA, via MAPK1/3 and PI3K-AKT1 pathways. May also play an apoptotic role via JAK2-STAT3 pathway and up-regulation of BIRC5 expression. Pro-angiogenic, has mitogenic activity on vascular endothelial cells and plays a role in matrix remodeling by regulating the expression of matrix metalloproteinases (MMPs) and tissue inhibitors of metalloproteinases (TIMPs). In innate immunity, modulates the activity and function of neutrophils by increasing chemotaxis and the secretion of oxygen radicals. Increases phagocytosis by macrophages and enhances secretion of pro-inflammatory mediators. Increases cytotoxic ability of NK cells. Plays a pro-inflammatory role, in synergy with IL1B, by inducing NOS2 which promotes the production of IL6, IL8 and Prostaglandin E2, through a signaling pathway that involves JAK2, PI3K, MAP2K1/MEK1 and MAPK14/p38. In adaptive immunity, promotes the switch of memory T-cells towards T helper-1 cell immune responses. Increases CD4(+)CD25(-) T-cell proliferation and reduces autophagy during TCR (T-cell receptor) stimulation, through MTOR signaling pathway activation and BCL2 up-regulation. This is Leptin (LEP) from Halichoerus grypus (Gray seal).